The sequence spans 185 residues: TRAF-interacting protein with FHA domain-containing protein A (185 aa).

A Phosphothreonine modification is found at T9. The FHA domain maps to 48 to 104 (VKFGRNSNMCQYTFQDKQVSRVQFALQPFKQFNSSVLSFEIKNMSKKTSLMVDNQEL).

Belongs to the TIFA family. Homooligomer; homooligomerizes following phosphorylation at Thr-9. Interacts with IRAK1, TRAF2 and TRAF6. Interacts with TIFAB; binding to TIFAB inhibits TRAF6 activation, possibly by inducing a conformational change in TIFA. Interacts with ZCCHC11; binding to ZCCHC11 suppresses the TRAF6-dependent activation of NF-kappa-B. Phosphorylated at Thr-9 following detection of ADP-D-glycero-beta-D-manno-heptose (ADP-Heptose) by ALPK1. Phosphorylation at Thr-9 by ALPK1 leads to the formation of an intermolecular binding between the FHA domain and phosphorylated Thr-9, promoting TIFA oligomerization and TIFA-mediated NF-kappa-B activation.

It localises to the cytoplasm. Its function is as follows. Adapter molecule that plays a key role in the activation of pro-inflammatory NF-kappa-B signaling following detection of bacterial pathogen-associated molecular pattern metabolites (PAMPs). Promotes activation of an innate immune response by inducing the oligomerization and polyubiquitination of TRAF6, which leads to the activation of TAK1 and IKK through a proteasome-independent mechanism. TIFA-dependent innate immune response is triggered by ADP-D-glycero-beta-D-manno-heptose (ADP-Heptose), a potent PAMP present in all Gram-negative and some Gram-positive bacteria: ADP-Heptose is recognized by ALPK1, which phosphorylates TIFA at Thr-9, leading to TIFA homooligomerization and subsequent activation of pro-inflammatory NF-kappa-B signaling. In Rattus norvegicus (Rat), this protein is TRAF-interacting protein with FHA domain-containing protein A.